The following is a 704-amino-acid chain: Methionine--tRNA ligase (704 aa).

The 'HIGH' region signature appears at 17–27 (PYANGPIHLGH). 4 residues coordinate Zn(2+): Cys148, Cys151, Cys161, and Cys164. Residues 348 to 352 (KMSKS) carry the 'KMSKS' region motif. Lys351 contacts ATP. The tRNA-binding domain maps to 603 to 704 (ELSKVELRVG…KDAKPGDRLK (102 aa)).

Belongs to the class-I aminoacyl-tRNA synthetase family. MetG type 1 subfamily. Homodimer. Requires Zn(2+) as cofactor.

It localises to the cytoplasm. It catalyses the reaction tRNA(Met) + L-methionine + ATP = L-methionyl-tRNA(Met) + AMP + diphosphate. In terms of biological role, is required not only for elongation of protein synthesis but also for the initiation of all mRNA translation through initiator tRNA(fMet) aminoacylation. The polypeptide is Methionine--tRNA ligase (Leptospira borgpetersenii serovar Hardjo-bovis (strain L550)).